Consider the following 20-residue polypeptide: Citrate synthase (20 aa).

Belongs to the citrate synthase family. Homodimer.

The catalysed reaction is oxaloacetate + acetyl-CoA + H2O = citrate + CoA + H(+). Its pathway is carbohydrate metabolism; tricarboxylic acid cycle; isocitrate from oxaloacetate: step 1/2. In Populus euphratica (Euphrates poplar), this protein is Citrate synthase.